The sequence spans 230 residues: MNRLNIAVSCLATALLFGCEALHPPAPGDNPDYAPTYPVTPDPKELRKVSGAIYSSETALPLFETPRARHPGDILTVFLIEKTDAQKNATTTQRKNDTTKITNKLFLGRPISLGSGYSMDFDLDNQRQFNGEGRSIQNNKLAGSISVTVAKVLANGNMVVQGEKWVRINQGNEFVRLSGIVRPQDIKADNTITSDRIANARISYGGTGQINNTNAQGWLSRILWGPLFPT.

Positions 1–18 (MNRLNIAVSCLATALLFG) are cleaved as a signal peptide. The N-palmitoyl cysteine moiety is linked to residue cysteine 19. A lipid anchor (S-diacylglycerol cysteine) is attached at cysteine 19.

It belongs to the FlgH family. The basal body constitutes a major portion of the flagellar organelle and consists of four rings (L,P,S, and M) mounted on a central rod.

It localises to the cell outer membrane. It is found in the bacterial flagellum basal body. Assembles around the rod to form the L-ring and probably protects the motor/basal body from shearing forces during rotation. The chain is Flagellar L-ring protein from Legionella pneumophila (strain Paris).